A 281-amino-acid chain; its full sequence is Pantothenate synthetase (281 aa).

30 to 37 (MGALHRGH) contributes to the ATP binding site. Histidine 37 acts as the Proton donor in catalysis. Glutamine 61 serves as a coordination point for (R)-pantoate. Glutamine 61 is a beta-alanine binding site. 147–150 (GEKD) contributes to the ATP binding site. Glutamine 153 is a binding site for (R)-pantoate. Residues isoleucine 176 and 184–187 (LSSR) contribute to the ATP site.

This sequence belongs to the pantothenate synthetase family. In terms of assembly, homodimer.

It localises to the cytoplasm. The enzyme catalyses (R)-pantoate + beta-alanine + ATP = (R)-pantothenate + AMP + diphosphate + H(+). It participates in cofactor biosynthesis; (R)-pantothenate biosynthesis; (R)-pantothenate from (R)-pantoate and beta-alanine: step 1/1. Functionally, catalyzes the condensation of pantoate with beta-alanine in an ATP-dependent reaction via a pantoyl-adenylate intermediate. The protein is Pantothenate synthetase of Porphyromonas gingivalis (strain ATCC 33277 / DSM 20709 / CIP 103683 / JCM 12257 / NCTC 11834 / 2561).